A 300-amino-acid polypeptide reads, in one-letter code: uncharacterized protein (300 aa).

The span at M1–A19 shows a compositional bias: basic and acidic residues. The interval M1 to Q20 is disordered.

This is an uncharacterized protein from Orgyia pseudotsugata multicapsid polyhedrosis virus (OpMNPV).